A 396-amino-acid polypeptide reads, in one-letter code: MAKEEFAREKPHVNVGTIGHVDHGKTTLTAAITKVLAERVGGAAEQTFEAIDNAPEERERGITIATSHVEYETENRHYAHVDCPGHADYVKNMVTGAAQMDGAILVVGSDDGPMPQTREHILLARQVGVPYLVVFMNKTDLVDDAELLELVEMEVRELLTEYEFPGDEVPVVRGSALQALESSEEHEEKIMELMEAVDEYIPTPERDVEKPFLMPVEDIFSITGRGTVVTGRIERGRVQLQDEIEIVGMQEEKMDSVVTGIEMFNKTLEEGEAGDNAGILLRGIEKEEVKRGMVLAEPGTVTPHKEFECEVYVLSKEEGGRHTPFFDGYQPQFYFRTTDVTGSIELPEGVEMVMPGDNATFEGSLIEPVALEEGLRFAIREGGHTVGAGVVTDILD.

The region spanning K10 to E205 is the tr-type G domain. The interval G19–T26 is G1. Position 19–26 (G19–T26) interacts with GTP. Mg(2+) is bound at residue T26. The tract at residues G61–A65 is G2. Residues D82–G85 form a G3 region. GTP contacts are provided by residues D82–H86 and N137–D140. The tract at residues N137–D140 is G4. The tract at residues S175–L177 is G5.

This sequence belongs to the TRAFAC class translation factor GTPase superfamily. Classic translation factor GTPase family. EF-Tu/EF-1A subfamily. In terms of assembly, monomer.

The protein resides in the cytoplasm. It catalyses the reaction GTP + H2O = GDP + phosphate + H(+). In terms of biological role, GTP hydrolase that promotes the GTP-dependent binding of aminoacyl-tRNA to the A-site of ribosomes during protein biosynthesis. The polypeptide is Elongation factor Tu (Salinibacter ruber (strain DSM 13855 / M31)).